Consider the following 309-residue polypeptide: L-aminoadipate-semialdehyde dehydrogenase-phosphopantetheinyl transferase (309 aa).

CoA is bound by residues R47, 86–91 (RTSKGK), and 108–111 (NISH). Mg(2+)-binding residues include D129 and E181. 181–185 (ESFIK) serves as a coordination point for CoA.

This sequence belongs to the P-Pant transferase superfamily. AcpS family. In terms of assembly, monomer. It depends on Mg(2+) as a cofactor.

The protein localises to the cytoplasm. The protein resides in the cytosol. It catalyses the reaction apo-[ACP] + CoA = holo-[ACP] + adenosine 3',5'-bisphosphate + H(+). It carries out the reaction apo-[ACP] + acetyl-CoA = acetyl-[ACP] + adenosine 3',5'-bisphosphate + H(+). Functionally, catalyzes the post-translational modification of target proteins by phosphopantetheine. Can transfer the 4'-phosphopantetheine moiety from coenzyme A, regardless of whether the CoA is presented in the free thiol form or as an acetyl thioester, to a serine residue of a broad range of acceptors including the acyl carrier domain of FASN. The sequence is that of L-aminoadipate-semialdehyde dehydrogenase-phosphopantetheinyl transferase (Aasdhppt) from Mus musculus (Mouse).